Consider the following 621-residue polypeptide: Putative 5'-3' exonuclease R528 (621 aa).

This sequence belongs to the 5'-3' exonuclease family.

The protein resides in the virion. The protein is Putative 5'-3' exonuclease R528 of Acanthamoeba polyphaga mimivirus (APMV).